The primary structure comprises 555 residues: uncharacterized protein (555 aa).

5 helical membrane passes run 13–30 (ALQAVVVLSLISAIGLGL), 35–57 (FWGVSLGVTFVFFAGILAGHFGL), 72–91 (LVIFVYSLGLQVGPGFFSSF), 98–120 (LNMLALAVVLLGTLLTVVASYAT), and 157–179 (TPALGCAVAYPMGVIGVILAVLL). 2 RCK C-terminal domains span residues 188–273 (EDLE…LFGE) and 282–366 (KEDI…VLGN). The next 6 membrane-spanning stretches (helical) occupy residues 376-398 (LVVIFIGIVLGLALGAIPFSIPG), 408-430 (AGGPIIVGILLGTFGPRIHMITY), 437-459 (LMLRALGLSMYLACLGLDAGAHF), 469-491 (LLWIALGAGLTIIPTVLVGFVAF), 498-517 (FGSVSGMLCGSMANPMALNY), and 532-554 (ATVYPLCMFLRVIIAQVLLMFLL).

The protein belongs to the AAE transporter (TC 2.A.81) family.

The protein resides in the cell membrane. This is an uncharacterized protein from Bacteroides thetaiotaomicron (strain ATCC 29148 / DSM 2079 / JCM 5827 / CCUG 10774 / NCTC 10582 / VPI-5482 / E50).